The sequence spans 350 residues: tRNA uridine(34) hydroxylase (350 aa).

Residues 146–240 (DDPDALFIDM…YARKAREQGL (95 aa)) enclose the Rhodanese domain. Residue C200 is the Cysteine persulfide intermediate of the active site.

Belongs to the TrhO family.

It carries out the reaction uridine(34) in tRNA + AH2 + O2 = 5-hydroxyuridine(34) in tRNA + A + H2O. Catalyzes oxygen-dependent 5-hydroxyuridine (ho5U) modification at position 34 in tRNAs, the first step in 5-carboxymethoxyuridine (cmo5U) biosynthesis. May be part of an alternate pathway, which is able to bypass cmo5U biogenesis in a subset of tRNAs under aerobic conditions. The sequence is that of tRNA uridine(34) hydroxylase from Escherichia coli O17:K52:H18 (strain UMN026 / ExPEC).